The chain runs to 31 residues: MFTITSYFGFLLAALTITSAIFIGLNKIRLI.

A helical transmembrane segment spans residues 4 to 24 (ITSYFGFLLAALTITSAIFIG).

Belongs to the PetL family. The 4 large subunits of the cytochrome b6-f complex are cytochrome b6, subunit IV (17 kDa polypeptide, PetD), cytochrome f and the Rieske protein, while the 4 small subunits are PetG, PetL, PetM and PetN. The complex functions as a dimer.

The protein localises to the plastid. Its subcellular location is the chloroplast thylakoid membrane. Component of the cytochrome b6-f complex, which mediates electron transfer between photosystem II (PSII) and photosystem I (PSI), cyclic electron flow around PSI, and state transitions. PetL is important for photoautotrophic growth as well as for electron transfer efficiency and stability of the cytochrome b6-f complex. The chain is Cytochrome b6-f complex subunit 6 from Ficus carica (Common fig).